Reading from the N-terminus, the 1072-residue chain is Dyslexia-associated protein KIAA0319 (1072 aa).

The first 20 residues, 1-20, serve as a signal peptide directing secretion; the sequence is MAPPTGVLSSLLLLVTIAGC. The MANSC domain maps to 21 to 99; it reads ARKQCSEGRT…PKKMGPIRSY (79 aa). Over 21–955 the chain is Extracellular; it reads ARKQCSEGRT…WDGESNCEWS (935 aa). Disordered stretches follow at residues 168–277 and 295–327; these read LQPS…SLPP and VTPGSTEHSIPTPPTSAAPSESTPSELPISPTT. Residues N196, N219, and N262 are each glycosylated (N-linked (GlcNAc...) asparagine). Polar residues predominate over residues 254-265; the sequence is SQLQEQSSNSSG. The segment covering 311-320 has biased composition (low complexity); the sequence is AAPSESTPSE. 5 PKD domains span residues 341–427, 435–524, 530–620, 621–714, and 720–811; these read DNLI…VKPA, VAVV…VNNA, VANA…VQPE, NNRP…VKKE, and RARA…VQPD. Residues N394, N421, N498, N513, N536, and N551 are each glycosylated (N-linked (GlcNAc...) asparagine). The N-linked (GlcNAc...) asparagine glycan is linked to N733. Residues 956-976 traverse the membrane as a helical segment; that stretch reads IFYVTVLAFTLIVLTGGFTWL. Topologically, residues 977–1072 are cytoplasmic; it reads CICCCKRQKR…ASFSYCSKDR (96 aa). An Endocytosis signal motif is present at residues 995-998; sequence YTIL. Residues 1045 to 1072 are disordered; that stretch reads KMERGNPKVSMNGSIRNGASFSYCSKDR. Polar residues predominate over residues 1053 to 1072; that stretch reads VSMNGSIRNGASFSYCSKDR.

Homodimer. Interacts with AP2M1; required for clathrin-mediated endocytosis. N-glycosylated. In terms of processing, O-glycosylated. Post-translationally, shedding of the extracellular domain and intramembrane cleavage produce several proteolytic products. The intramembrane cleavage releases a soluble cytoplasmic polypeptide that translocates to the nucleolus. As to expression, detected in adult brain cortex and fetal frontal lobe (at protein level). Highly expressed in brain cortex, putamen, amygdala, hippocampus and cerebellum.

The protein localises to the cell membrane. Its subcellular location is the early endosome membrane. Functionally, involved in neuronal migration during development of the cerebral neocortex. May function in a cell autonomous and a non-cell autonomous manner and play a role in appropriate adhesion between migrating neurons and radial glial fibers. May also regulate growth and differentiation of dendrites. The protein is Dyslexia-associated protein KIAA0319 (KIAA0319) of Homo sapiens (Human).